The chain runs to 1073 residues: Probable inorganic carbon transporter subunit DabA (1073 aa).

Zn(2+)-binding residues include Cys551, Asp553, His742, and Cys757.

This sequence belongs to the inorganic carbon transporter (TC 9.A.2) DabA family. Forms a complex with DabB. Zn(2+) is required as a cofactor.

It localises to the cell inner membrane. In terms of biological role, part of an energy-coupled inorganic carbon pump. The sequence is that of Probable inorganic carbon transporter subunit DabA from Methylococcus capsulatus (strain ATCC 33009 / NCIMB 11132 / Bath).